Consider the following 123-residue polypeptide: Putative outer membrane protein CPn_0818/CP_1053/CPj0818/CpB0847 (123 aa).

Residues 1–30 (MKRQKRKQSITLIEMMVVITLIGIIGGALA) form the signal peptide.

The protein localises to the cell outer membrane. This chain is Putative outer membrane protein CPn_0818/CP_1053/CPj0818/CpB0847, found in Chlamydia pneumoniae (Chlamydophila pneumoniae).